Consider the following 342-residue polypeptide: Nicotinate-nucleotide--dimethylbenzimidazole phosphoribosyltransferase (342 aa).

The Proton acceptor role is filled by Glu311.

The protein belongs to the CobT family.

It catalyses the reaction 5,6-dimethylbenzimidazole + nicotinate beta-D-ribonucleotide = alpha-ribazole 5'-phosphate + nicotinate + H(+). The protein operates within nucleoside biosynthesis; alpha-ribazole biosynthesis; alpha-ribazole from 5,6-dimethylbenzimidazole: step 1/2. In terms of biological role, catalyzes the synthesis of alpha-ribazole-5'-phosphate from nicotinate mononucleotide (NAMN) and 5,6-dimethylbenzimidazole (DMB). The polypeptide is Nicotinate-nucleotide--dimethylbenzimidazole phosphoribosyltransferase (Shewanella loihica (strain ATCC BAA-1088 / PV-4)).